The following is a 62-amino-acid chain: Small ribosomal subunit protein bS21 (62 aa).

Over residues 43 to 52 (VKKKLKSEAA) the composition is skewed to basic and acidic residues. Residues 43–62 (VKKKLKSEAARKRKNRRRFK) are disordered. Over residues 53-62 (RKRKNRRRFK) the composition is skewed to basic residues.

This sequence belongs to the bacterial ribosomal protein bS21 family.

In Lactiplantibacillus plantarum (strain ATCC BAA-793 / NCIMB 8826 / WCFS1) (Lactobacillus plantarum), this protein is Small ribosomal subunit protein bS21.